The sequence spans 631 residues: Phosphomethylpyrimidine synthase (631 aa).

Residues Asn239, Met268, Tyr297, His333, 353–355 (SRG), 394–397 (DGLR), and Glu433 each bind substrate. Residue His437 coordinates Zn(2+). A substrate-binding site is contributed by Tyr460. A Zn(2+)-binding site is contributed by His501. Cys581, Cys584, and Cys589 together coordinate [4Fe-4S] cluster.

The protein belongs to the ThiC family. Homodimer. It depends on [4Fe-4S] cluster as a cofactor.

It carries out the reaction 5-amino-1-(5-phospho-beta-D-ribosyl)imidazole + S-adenosyl-L-methionine = 4-amino-2-methyl-5-(phosphooxymethyl)pyrimidine + CO + 5'-deoxyadenosine + formate + L-methionine + 3 H(+). The protein operates within cofactor biosynthesis; thiamine diphosphate biosynthesis. Catalyzes the synthesis of the hydroxymethylpyrimidine phosphate (HMP-P) moiety of thiamine from aminoimidazole ribotide (AIR) in a radical S-adenosyl-L-methionine (SAM)-dependent reaction. The polypeptide is Phosphomethylpyrimidine synthase (Salmonella gallinarum (strain 287/91 / NCTC 13346)).